The chain runs to 170 residues: RxLR effector protein CRE16 (170 aa).

The N-terminal stretch at 1–23 is a signal peptide; it reads MSKLFYAFAVLAVHVLTSSPTTA. Residues 47 to 68 carry the RxLR-dEER motif; sequence RFLRSIHEGEDSLKPSAFSEER.

Belongs to the RxLR effector family.

It localises to the secreted. The protein localises to the host cytoplasm. Its subcellular location is the host nucleus. Functionally, effector that is involved in host plant infection. Contributes to virulence during the early infection stage, by inhibiting plant defense responses induced by both PAMP-triggered immunity (PTI) and effector-triggered immunity (ETI). This is RxLR effector protein CRE16 from Phytophthora infestans (strain T30-4) (Potato late blight agent).